The following is a 414-amino-acid chain: Solute carrier family 25 member 46-B (414 aa).

Over residues 1–13 (MQPRRPDRFDGLE) the composition is skewed to basic and acidic residues. The segment at 1–89 (MQPRRPDRFD…AFGEENSGSS (89 aa)) is disordered. Over residues 29–50 (YQSSFPARSLSSSGDLSQQWVT) the composition is skewed to polar residues. Residues 92 to 183 (QVNRFAGFGI…GMLSEFTHLP (92 aa)) form a Solcar 1 repeat. The next 6 helical transmembrane spans lie at 99–119 (FGIG…CIVL), 159–179 (MGST…LSEF), 198–218 (HLLL…ASLI), 254–274 (LLPL…HYII), 310–330 (FPEL…LYPL), and 379–399 (LGFY…AIVL). A Solcar 2 repeat occupies 307–412 (EDYFPELLAN…KIIYSSVVQT (106 aa)).

It belongs to the mitochondrial carrier (TC 2.A.29) family.

Its subcellular location is the mitochondrion outer membrane. May play a role in mitochondrial dynamics by controlling mitochondrial membrane fission. This is Solute carrier family 25 member 46-B (slc25a46-b) from Xenopus laevis (African clawed frog).